The primary structure comprises 485 residues: Predicted GPI-anchored protein 27 (485 aa).

Residues 1–20 (MHFTSSLLATLIWFTLPVQS) form the signal peptide. 4 N-linked (GlcNAc...) asparagine glycosylation sites follow: Asn-30, Asn-86, Asn-96, and Asn-444. The GPI-anchor amidated glycine moiety is linked to residue Gly-467. Positions 468–485 (LVLVSSGVLLGTCLLFIL) are cleaved as a propeptide — removed in mature form.

Its subcellular location is the cell membrane. In Candida albicans (strain SC5314 / ATCC MYA-2876) (Yeast), this protein is Predicted GPI-anchored protein 27 (PGA27).